Here is a 504-residue protein sequence, read N- to C-terminus: Syntaphilin (504 aa).

Residues 1-74 form a disordered region; the sequence is MAMSLQGSRR…HGIKPPTPEQ (74 aa). Composition is skewed to low complexity over residues 7-26 and 33-49; these read GSRR…VSVR and SLSS…SDSS. A coiled-coil region spans residues 79-161; that stretch reads LQQKEVCIRH…VKNNLIDKDK (83 aa). A disordered region spans residues 191 to 244; that stretch reads VAKEEGTGESAGGSPARSLTRSSTYTKLSDPAVCGDRQAGDPSNTPAEDRADSG. Phosphoserine is present on residues serine 200 and serine 204. The span at 207–217 shows a compositional bias: polar residues; it reads RSLTRSSTYTK. A Phosphothreonine modification is found at threonine 214. Serine 219 bears the Phosphoserine mark. Threonine 235 bears the Phosphothreonine mark. Residues 437–456 traverse the membrane as a helical segment; sequence YIVDLLAVVVPAVPTVAWLC.

In terms of assembly, binds to STX1A. Interacts with DNM1; this interaction inhibits the binding of DNM1 to AMPH and DNM1-receptor-mediated endocytosis.

It is found in the membrane. Its subcellular location is the synapse. The protein resides in the synaptosome. In terms of biological role, inhibits SNARE complex formation by absorbing free STX1A. The protein is Syntaphilin of Rattus norvegicus (Rat).